A 340-amino-acid chain; its full sequence is Phosphate acyltransferase (340 aa).

Belongs to the PlsX family. In terms of assembly, homodimer. Probably interacts with PlsY.

It localises to the cytoplasm. The enzyme catalyses a fatty acyl-[ACP] + phosphate = an acyl phosphate + holo-[ACP]. The protein operates within lipid metabolism; phospholipid metabolism. Functionally, catalyzes the reversible formation of acyl-phosphate (acyl-PO(4)) from acyl-[acyl-carrier-protein] (acyl-ACP). This enzyme utilizes acyl-ACP as fatty acyl donor, but not acyl-CoA. This chain is Phosphate acyltransferase, found in Leptospira biflexa serovar Patoc (strain Patoc 1 / ATCC 23582 / Paris).